A 94-amino-acid polypeptide reads, in one-letter code: CRISPR-associated endoribonuclease Cas2 (94 aa).

Mg(2+) is bound at residue D11.

The protein belongs to the CRISPR-associated endoribonuclease Cas2 protein family. In terms of assembly, homodimer, forms a heterotetramer with a Cas1 homodimer. Mg(2+) serves as cofactor.

Functionally, CRISPR (clustered regularly interspaced short palindromic repeat), is an adaptive immune system that provides protection against mobile genetic elements (viruses, transposable elements and conjugative plasmids). CRISPR clusters contain sequences complementary to antecedent mobile elements and target invading nucleic acids. CRISPR clusters are transcribed and processed into CRISPR RNA (crRNA). Functions as a ssRNA-specific endoribonuclease. Involved in the integration of spacer DNA into the CRISPR cassette. The chain is CRISPR-associated endoribonuclease Cas2 from Allochromatium vinosum (strain ATCC 17899 / DSM 180 / NBRC 103801 / NCIMB 10441 / D) (Chromatium vinosum).